Consider the following 35-residue polypeptide: MEALVYTFLLXSTLGIIFFAIFFREPPKVPDRGGK.

A helical membrane pass occupies residues 3–23; the sequence is ALVYTFLLXSTLGIIFFAIFF.

This sequence belongs to the PsbT family. PSII is composed of 1 copy each of membrane proteins PsbA, PsbB, PsbC, PsbD, PsbE, PsbF, PsbH, PsbI, PsbJ, PsbK, PsbL, PsbM, PsbT, PsbY, PsbZ, Psb30/Ycf12, at least 3 peripheral proteins of the oxygen-evolving complex and a large number of cofactors. It forms dimeric complexes.

It localises to the plastid. Its subcellular location is the chloroplast thylakoid membrane. Found at the monomer-monomer interface of the photosystem II (PS II) dimer, plays a role in assembly and dimerization of PSII. PSII is a light-driven water plastoquinone oxidoreductase, using light energy to abstract electrons from H(2)O, generating a proton gradient subsequently used for ATP formation. In Cunninghamia lanceolata (China fir), this protein is Photosystem II reaction center protein T.